Here is a 206-residue protein sequence, read N- to C-terminus: Small ribosomal subunit protein uS4 (206 aa).

The S4 RNA-binding domain occupies 96 to 156 (GRLDNVVYRM…EKAKQQARIK (61 aa)).

It belongs to the universal ribosomal protein uS4 family. As to quaternary structure, part of the 30S ribosomal subunit. Contacts protein S5. The interaction surface between S4 and S5 is involved in control of translational fidelity.

Its function is as follows. One of the primary rRNA binding proteins, it binds directly to 16S rRNA where it nucleates assembly of the body of the 30S subunit. Functionally, with S5 and S12 plays an important role in translational accuracy. The chain is Small ribosomal subunit protein uS4 from Vibrio campbellii (strain ATCC BAA-1116).